A 528-amino-acid polypeptide reads, in one-letter code: D-3-phosphoglycerate dehydrogenase (528 aa).

NAD(+) is bound by residues 151–152 (RI), Asp171, 230–232 (AAR), and Asp256. Arg232 is a catalytic residue. Glu261 is a catalytic residue. The Proton donor role is filled by His279. NAD(+) is bound at residue 279–282 (HLGA). Residues 455–527 (NLIIHYVDRP…DAYKLEVVDL (73 aa)) enclose the ACT domain.

The protein belongs to the D-isomer specific 2-hydroxyacid dehydrogenase family.

It catalyses the reaction (2R)-3-phosphoglycerate + NAD(+) = 3-phosphooxypyruvate + NADH + H(+). It carries out the reaction (R)-2-hydroxyglutarate + NAD(+) = 2-oxoglutarate + NADH + H(+). It functions in the pathway amino-acid biosynthesis; L-serine biosynthesis; L-serine from 3-phospho-D-glycerate: step 1/3. In terms of biological role, catalyzes the reversible oxidation of 3-phospho-D-glycerate to 3-phosphonooxypyruvate, the first step of the phosphorylated L-serine biosynthesis pathway. Also catalyzes the reversible oxidation of 2-hydroxyglutarate to 2-oxoglutarate. The protein is D-3-phosphoglycerate dehydrogenase (serA) of Mycobacterium bovis (strain ATCC BAA-935 / AF2122/97).